Consider the following 378-residue polypeptide: Phosphoserine aminotransferase (378 aa).

Arg53 contacts L-glutamate. 4 residues coordinate pyridoxal 5'-phosphate: Trp117, Thr167, Asp190, and Gln213. At Lys214 the chain carries N6-(pyridoxal phosphate)lysine. 255 to 256 (NT) is a binding site for pyridoxal 5'-phosphate.

Belongs to the class-V pyridoxal-phosphate-dependent aminotransferase family. SerC subfamily. As to quaternary structure, homodimer. Requires pyridoxal 5'-phosphate as cofactor.

The protein resides in the cytoplasm. It catalyses the reaction O-phospho-L-serine + 2-oxoglutarate = 3-phosphooxypyruvate + L-glutamate. It carries out the reaction 4-(phosphooxy)-L-threonine + 2-oxoglutarate = (R)-3-hydroxy-2-oxo-4-phosphooxybutanoate + L-glutamate. It functions in the pathway amino-acid biosynthesis; L-serine biosynthesis; L-serine from 3-phospho-D-glycerate: step 2/3. It participates in cofactor biosynthesis; pyridoxine 5'-phosphate biosynthesis; pyridoxine 5'-phosphate from D-erythrose 4-phosphate: step 3/5. Catalyzes the reversible conversion of 3-phosphohydroxypyruvate to phosphoserine and of 3-hydroxy-2-oxo-4-phosphonooxybutanoate to phosphohydroxythreonine. The chain is Phosphoserine aminotransferase from Ralstonia nicotianae (strain ATCC BAA-1114 / GMI1000) (Ralstonia solanacearum).